Consider the following 162-residue polypeptide: Ribonuclease H (162 aa).

One can recognise an RNase H type-1 domain in the interval 1–141 (MKRIEIFTDG…ADALARAGMA (141 aa)). 4 residues coordinate Mg(2+): aspartate 9, glutamate 47, aspartate 69, and aspartate 133. The tract at residues 139-162 (GMAPFKKKKGGDTASSEEGSARRR) is disordered.

This sequence belongs to the RNase H family. As to quaternary structure, monomer. It depends on Mg(2+) as a cofactor.

The protein resides in the cytoplasm. The enzyme catalyses Endonucleolytic cleavage to 5'-phosphomonoester.. Its function is as follows. Endonuclease that specifically degrades the RNA of RNA-DNA hybrids. This chain is Ribonuclease H, found in Chelativorans sp. (strain BNC1).